The primary structure comprises 322 residues: Stage V sporulation protein K (322 aa).

Residue 99 to 106 (GNPGTGKT) participates in ATP binding.

This sequence belongs to the CbxX/CfxQ family.

This chain is Stage V sporulation protein K (spoVK), found in Bacillus subtilis (strain 168).